We begin with the raw amino-acid sequence, 155 residues long: MRDIVMTYWLFSSNNIRNIEICYNHMIWGFWDRNAGEKQKKNWRSFIRKYNQIKPFDVAVFQIAKTGEIHAIGVIKETYYDDQTPIWDNEINLNKVTFPWRVSFSVIIFSKEAVIKRFIKIQDYIDGYGLGELEHHDFNEILKAFQKKFGMISIK.

This is an uncharacterized protein from Methanocaldococcus jannaschii (strain ATCC 43067 / DSM 2661 / JAL-1 / JCM 10045 / NBRC 100440) (Methanococcus jannaschii).